The following is a 148-amino-acid chain: Cyanate hydratase (148 aa).

Active-site residues include arginine 89, glutamate 92, and serine 115.

This sequence belongs to the cyanase family.

The enzyme catalyses cyanate + hydrogencarbonate + 3 H(+) = NH4(+) + 2 CO2. Its function is as follows. Catalyzes the reaction of cyanate with bicarbonate to produce ammonia and carbon dioxide. This chain is Cyanate hydratase, found in Sulfurisphaera tokodaii (strain DSM 16993 / JCM 10545 / NBRC 100140 / 7) (Sulfolobus tokodaii).